A 275-amino-acid polypeptide reads, in one-letter code: Large ribosomal subunit protein uL2 (275 aa).

2 disordered regions span residues 28 to 54 (APHAPLLEKKSKSGGRNNNGRITTRHI) and 223 to 275 (VAMN…RNKK).

It belongs to the universal ribosomal protein uL2 family. As to quaternary structure, part of the 50S ribosomal subunit. Forms a bridge to the 30S subunit in the 70S ribosome.

One of the primary rRNA binding proteins. Required for association of the 30S and 50S subunits to form the 70S ribosome, for tRNA binding and peptide bond formation. It has been suggested to have peptidyltransferase activity; this is somewhat controversial. Makes several contacts with the 16S rRNA in the 70S ribosome. The polypeptide is Large ribosomal subunit protein uL2 (Saccharophagus degradans (strain 2-40 / ATCC 43961 / DSM 17024)).